Here is a 238-residue protein sequence, read N- to C-terminus: Ribonuclease PH (238 aa).

Phosphate is bound by residues Arg86 and 124 to 126 (GTR).

It belongs to the RNase PH family. As to quaternary structure, homohexameric ring arranged as a trimer of dimers.

The catalysed reaction is tRNA(n+1) + phosphate = tRNA(n) + a ribonucleoside 5'-diphosphate. In terms of biological role, phosphorolytic 3'-5' exoribonuclease that plays an important role in tRNA 3'-end maturation. Removes nucleotide residues following the 3'-CCA terminus of tRNAs; can also add nucleotides to the ends of RNA molecules by using nucleoside diphosphates as substrates, but this may not be physiologically important. Probably plays a role in initiation of 16S rRNA degradation (leading to ribosome degradation) during starvation. The sequence is that of Ribonuclease PH from Trichlorobacter lovleyi (strain ATCC BAA-1151 / DSM 17278 / SZ) (Geobacter lovleyi).